We begin with the raw amino-acid sequence, 60 residues long: Large ribosomal subunit protein bL32 (60 aa).

It belongs to the bacterial ribosomal protein bL32 family.

This Oenococcus oeni (strain ATCC BAA-331 / PSU-1) protein is Large ribosomal subunit protein bL32.